Here is a 293-residue protein sequence, read N- to C-terminus: Ribosomal protein L11 methyltransferase (293 aa).

Residues Thr145, Gly166, Asp188, and Asn230 each coordinate S-adenosyl-L-methionine.

Belongs to the methyltransferase superfamily. PrmA family.

It localises to the cytoplasm. It catalyses the reaction L-lysyl-[protein] + 3 S-adenosyl-L-methionine = N(6),N(6),N(6)-trimethyl-L-lysyl-[protein] + 3 S-adenosyl-L-homocysteine + 3 H(+). In terms of biological role, methylates ribosomal protein L11. The chain is Ribosomal protein L11 methyltransferase from Shewanella putrefaciens (strain CN-32 / ATCC BAA-453).